A 479-amino-acid chain; its full sequence is Aspartyl/glutamyl-tRNA(Asn/Gln) amidotransferase subunit B (479 aa).

The protein belongs to the GatB/GatE family. GatB subfamily. Heterotrimer of A, B and C subunits.

The catalysed reaction is L-glutamyl-tRNA(Gln) + L-glutamine + ATP + H2O = L-glutaminyl-tRNA(Gln) + L-glutamate + ADP + phosphate + H(+). It catalyses the reaction L-aspartyl-tRNA(Asn) + L-glutamine + ATP + H2O = L-asparaginyl-tRNA(Asn) + L-glutamate + ADP + phosphate + 2 H(+). In terms of biological role, allows the formation of correctly charged Asn-tRNA(Asn) or Gln-tRNA(Gln) through the transamidation of misacylated Asp-tRNA(Asn) or Glu-tRNA(Gln) in organisms which lack either or both of asparaginyl-tRNA or glutaminyl-tRNA synthetases. The reaction takes place in the presence of glutamine and ATP through an activated phospho-Asp-tRNA(Asn) or phospho-Glu-tRNA(Gln). The chain is Aspartyl/glutamyl-tRNA(Asn/Gln) amidotransferase subunit B from Geobacter sp. (strain M21).